The chain runs to 601 residues: ATP-dependent lipid A-core flippase (601 aa).

6 helical membrane passes run 35–55 (FAVA…LAFL), 77–97 (LAII…AILM), 150–170 (AVTS…VIFY), 173–193 (WQLA…IAKF), 263–283 (MEFL…YQVI), and 286–306 (SSTP…YEPV). An ABC transmembrane type-1 domain is found at 36-318 (AVAMVCMLIA…LTNVNNTIQQ (283 aa)). Residues 352–585 (IEIRNISFAY…RGEYYKLHQL (234 aa)) enclose the ABC transporter domain. Position 384–391 (384–391 (GMSGGGKT)) interacts with ATP.

The protein belongs to the ABC transporter superfamily. Lipid exporter (TC 3.A.1.106) family. Homodimer.

The protein resides in the cell inner membrane. It catalyses the reaction ATP + H2O + lipid A-core oligosaccharideSide 1 = ADP + phosphate + lipid A-core oligosaccharideSide 2.. In terms of biological role, involved in lipopolysaccharide (LPS) biosynthesis. Translocates lipid A-core from the inner to the outer leaflet of the inner membrane. Transmembrane domains (TMD) form a pore in the inner membrane and the ATP-binding domain (NBD) is responsible for energy generation. The polypeptide is ATP-dependent lipid A-core flippase (Syntrophus aciditrophicus (strain SB)).